Reading from the N-terminus, the 364-residue chain is Developmentally-regulated GTP-binding protein 2 (364 aa).

(3S)-3-hydroxylysine is present on lysine 21. Positions 63-288 (ARVALIGFPS…LLEMLWEYLA (226 aa)) constitute an OBG-type G domain. Residues 69 to 76 (GFPSVGKS), 94 to 98 (FTTLT), 115 to 118 (DLPG), 246 to 249 (NKID), and 269 to 271 (SCG) each bind GTP. Mg(2+) contacts are provided by serine 76 and threonine 96. In terms of domain architecture, TGS spans 288–363 (ALTCIYTKKR…EHEDVIQIVK (76 aa)).

This sequence belongs to the TRAFAC class OBG-HflX-like GTPase superfamily. OBG GTPase family. As to quaternary structure, interacts with RWDD1; this interaction confers protection to polyubiquitination and proteolytic degradation. Interacts with JMJD7; this interaction is direct. The cofactor is Mg(2+). In terms of processing, hydroxylated (with S stereochemistry) at C-3 of Lys-21 by JMJD7; this modification hinders trypsin-catalyzed proteolysis in vitro. Polyubiquitinated. In terms of tissue distribution, highest levels in skeletal muscle, heart and kidney. Low levels in colon, thymus, spleen, small intestine, lung and Leukocytes.

The protein localises to the nucleus. It localises to the cytoplasm. The catalysed reaction is GTP + H2O = GDP + phosphate + H(+). In terms of biological role, catalyzes the conversion of GTP to GDP through hydrolysis of the gamma-phosphate bond in GTP. When hydroxylated at C-3 of 'Lys-21' by JMJD7, may bind to RNA and play a role in translation. The sequence is that of Developmentally-regulated GTP-binding protein 2 from Homo sapiens (Human).